The primary structure comprises 199 residues: Protein-methionine-sulfoxide reductase heme-binding subunit MsrQ (199 aa).

4 helical membrane-spanning segments follow: residues 10–30, 82–102, 116–136, and 153–173; these read WLKVCLHLAGFLPLLWLFWAI, LWCFVWATLHLTSYALLELGI, PYLTLGIISWLVLLALTLTST, and VVYLVAILAPIHYLWSVKILS.

The protein belongs to the MsrQ family. Heterodimer of a catalytic subunit (MsrP) and a heme-binding subunit (MsrQ). The cofactor is FMN. Requires heme b as cofactor.

The protein resides in the cell inner membrane. Functionally, part of the MsrPQ system that repairs oxidized periplasmic proteins containing methionine sulfoxide residues (Met-O), using respiratory chain electrons. Thus protects these proteins from oxidative-stress damage caused by reactive species of oxygen and chlorine generated by the host defense mechanisms. MsrPQ is essential for the maintenance of envelope integrity under bleach stress, rescuing a wide series of structurally unrelated periplasmic proteins from methionine oxidation, including the primary periplasmic chaperone SurA and the lipoprotein Pal. MsrQ provides electrons for reduction to the reductase catalytic subunit MsrP, using the quinone pool of the respiratory chain. In Salmonella enteritidis PT4 (strain P125109), this protein is Protein-methionine-sulfoxide reductase heme-binding subunit MsrQ.